The sequence spans 1106 residues: Solute carrier family 12 member 7 (1106 aa).

Residues Met-1 to Gly-143 lie on the Cytoplasmic side of the membrane. The segment at Gly-17–Asp-83 is disordered. Residues Ser-74 and Ser-86 each carry the phosphoserine modification. The discontinuously helical transmembrane segment at Thr-144 to Thr-166 threads the bilayer. The K(+) site is built by Asn-155 and Ile-156. Val-159 lines the chloride pocket. Topologically, residues Trp-167 to Gly-173 are extracellular. A helical transmembrane segment spans residues Val-174–Ser-196. The Cytoplasmic portion of the chain corresponds to Ala-197–Glu-220. Residues Phe-221–Leu-249 traverse the membrane as a helical segment. At Thr-250–His-273 the chain is on the extracellular side. The next 2 helical transmembrane spans lie at Asn-274 to Lys-295 and Tyr-296 to Phe-324. Over Asp-325–Tyr-443 the chain is Extracellular. Asn-336, Asn-355, and Asn-384 each carry an N-linked (GlcNAc...) asparagine glycan. The chain crosses the membrane as a helical span at residues Phe-444–Arg-464. Residues Pro-453 and Thr-456 each contribute to the K(+) site. Chloride is bound at residue Pro-453. Chloride contacts are provided by Gly-457 and Ile-458. Topologically, residues Ser-465–Ser-474 are cytoplasmic. The helical transmembrane segment at Ile-475–Phe-497 threads the bilayer. At Gly-498–Pro-528 the chain is on the extracellular side. Residues Trp-529–Gln-555 traverse the membrane as a helical segment. Residues Ala-556 to Pro-578 are Cytoplasmic-facing. 2 helical membrane-spanning segments follow: residues Thr-579–Ser-597 and Leu-598–Val-622. A chloride-binding site is contributed by Tyr-613. Residues Gln-623 to Lys-636 are Cytoplasmic-facing. The next 2 membrane-spanning stretches (helical) occupy residues Tyr-637–Trp-659 and Tyr-660–Tyr-675. The Cytoplasmic segment spans residues Ile-676–Ser-1106. The tract at residues Gly-688–Val-704 is scissor helix. The segment at Arg-980 to Lys-999 is disordered. Thr-996 and Thr-1003 each carry phosphothreonine.

This sequence belongs to the SLC12A transporter family. K/Cl co-transporter subfamily. As to quaternary structure, homodimer; adopts a domain-swap conformation at the scissor helices connecting the transmembrane domain and C-terminal domain. Heterodimer with K-Cl cotransporter SLC12A5. In terms of tissue distribution, widely expressed. Higher levels in heart, kidney and lung (at protein level).

It is found in the cell membrane. It carries out the reaction K(+)(in) + chloride(in) = K(+)(out) + chloride(out). Its activity is regulated as follows. Activated by N-ethylmaleimide (NEM). Inhibited by furosemide, DIDS and bumetanide. The inhibition is much stronger in the presence of 50 mM K(+) in the uptake medium. Inhibited by DIOA. Inhibited by WNK3. In terms of biological role, mediates electroneutral potassium-chloride cotransport when activated by cell swelling. May mediate K(+) uptake into Deiters' cells in the cochlea and contribute to K(+) recycling in the inner ear. Important for the survival of cochlear outer and inner hair cells and the maintenance of the organ of Corti. May be required for basolateral Cl(-) extrusion in the kidney and contribute to renal acidification. The protein is Solute carrier family 12 member 7 of Oryctolagus cuniculus (Rabbit).